A 450-amino-acid chain; its full sequence is LanC-like protein 2 (450 aa).

Gly-2 is lipidated: N-myristoyl glycine. An interaction with inositol phospholipids region spans residues 2–15 (GETMSKRLKLHLGG). Tyr-198 bears the Phosphotyrosine mark.

Belongs to the LanC-like protein family. As to quaternary structure, interacts with an array of inositol phospholipids such as phosphatidylinositol 3-phosphate (PI3P), phosphatidylinositol 4-phosphate (PI4P) and phosphatidylinositol 5-phosphate (PI5P). PIP-binding enhances membrane association. Post-translationally, myristoylated. Essential for membrane association. As to expression, expressed in brain and testis.

The protein resides in the nucleus. Its subcellular location is the cytoplasm. The protein localises to the cell membrane. Its function is as follows. Necessary for abscisic acid (ABA) binding on the cell membrane and activation of the ABA signaling pathway in granulocytes. This is LanC-like protein 2 (LANCL2) from Homo sapiens (Human).